The sequence spans 123 residues: Large ribosomal subunit protein bL12 (123 aa).

This sequence belongs to the bacterial ribosomal protein bL12 family. In terms of assembly, homodimer. Part of the ribosomal stalk of the 50S ribosomal subunit. Forms a multimeric L10(L12)X complex, where L10 forms an elongated spine to which 2 to 4 L12 dimers bind in a sequential fashion. Binds GTP-bound translation factors.

Its function is as follows. Forms part of the ribosomal stalk which helps the ribosome interact with GTP-bound translation factors. Is thus essential for accurate translation. This is Large ribosomal subunit protein bL12 from Rhodopseudomonas palustris (strain BisB18).